We begin with the raw amino-acid sequence, 277 residues long: Large ribosomal subunit protein uL2 (277 aa).

Disordered regions lie at residues 1–58 (MGIR…GGGH) and 223–277 (GVVM…GKKR). Over residues 23–33 (EITRSEPEKSL) the composition is skewed to basic and acidic residues. Over residues 37–58 (LHGRGGRNAHGKITTRHKGGGH) the composition is skewed to basic residues. Residues 251–267 (GKPEGRTRRNKPSDKLI) show a composition bias toward basic and acidic residues. Positions 268 to 277 (VRRRRTGKKR) are enriched in basic residues.

Belongs to the universal ribosomal protein uL2 family. As to quaternary structure, part of the 50S ribosomal subunit. Forms a bridge to the 30S subunit in the 70S ribosome.

Functionally, one of the primary rRNA binding proteins. Required for association of the 30S and 50S subunits to form the 70S ribosome, for tRNA binding and peptide bond formation. It has been suggested to have peptidyltransferase activity; this is somewhat controversial. Makes several contacts with the 16S rRNA in the 70S ribosome. This is Large ribosomal subunit protein uL2 from Saccharopolyspora erythraea (strain ATCC 11635 / DSM 40517 / JCM 4748 / NBRC 13426 / NCIMB 8594 / NRRL 2338).